The chain runs to 490 residues: Betaine aldehyde dehydrogenase (490 aa).

K(+) is bound at residue Asp93. 150–152 (GAW) provides a ligand contact to NAD(+). The active-site Charge relay system is the Lys162. 176–179 (KPSE) contacts NAD(+). Val180 is a binding site for K(+). NAD(+) is bound at residue 230–233 (GIAS). Leu246 serves as a coordination point for K(+). The active-site Proton acceptor is Glu252. Positions 254, 286, and 387 each coordinate NAD(+). Cys286 functions as the Nucleophile in the catalytic mechanism. A Cysteine sulfenic acid (-SOH) modification is found at Cys286. K(+)-binding residues include Lys457 and Gly460. Glu464 acts as the Charge relay system in catalysis.

It belongs to the aldehyde dehydrogenase family. Dimer of dimers. The cofactor is K(+).

The catalysed reaction is betaine aldehyde + NAD(+) + H2O = glycine betaine + NADH + 2 H(+). Its pathway is amine and polyamine biosynthesis; betaine biosynthesis via choline pathway; betaine from betaine aldehyde: step 1/1. Its function is as follows. Involved in the biosynthesis of the osmoprotectant glycine betaine. Catalyzes the irreversible oxidation of betaine aldehyde to the corresponding acid. The sequence is that of Betaine aldehyde dehydrogenase from Pectobacterium carotovorum subsp. carotovorum (strain PC1).